Here is a 141-residue protein sequence, read N- to C-terminus: Nucleoside diphosphate kinase (141 aa).

6 residues coordinate ATP: Lys11, Phe59, Arg87, Thr93, Arg104, and Asn114. The active-site Pros-phosphohistidine intermediate is His117.

The protein belongs to the NDK family. Homotetramer. Mg(2+) is required as a cofactor.

It is found in the cytoplasm. The catalysed reaction is a 2'-deoxyribonucleoside 5'-diphosphate + ATP = a 2'-deoxyribonucleoside 5'-triphosphate + ADP. It carries out the reaction a ribonucleoside 5'-diphosphate + ATP = a ribonucleoside 5'-triphosphate + ADP. In terms of biological role, major role in the synthesis of nucleoside triphosphates other than ATP. The ATP gamma phosphate is transferred to the NDP beta phosphate via a ping-pong mechanism, using a phosphorylated active-site intermediate. This chain is Nucleoside diphosphate kinase, found in Haemophilus influenzae (strain ATCC 51907 / DSM 11121 / KW20 / Rd).